Here is a 300-residue protein sequence, read N- to C-terminus: Ribonuclease HIII (300 aa).

An RNase H type-2 domain is found at 86 to 300 (RSRIGVDESG…FNEVLGSGNQ (215 aa)). Positions 92, 93, and 196 each coordinate a divalent metal cation.

Belongs to the RNase HII family. RnhC subfamily. Mn(2+) is required as a cofactor. The cofactor is Mg(2+).

Its subcellular location is the cytoplasm. The enzyme catalyses Endonucleolytic cleavage to 5'-phosphomonoester.. Functionally, endonuclease that specifically degrades the RNA of RNA-DNA hybrids. The polypeptide is Ribonuclease HIII (Chlamydia trachomatis serovar L2 (strain ATCC VR-902B / DSM 19102 / 434/Bu)).